The chain runs to 355 residues: DNA polymerase IV (355 aa).

The region spanning Ile7–Gly188 is the UmuC domain. Residues Asp11 and Asp106 each coordinate Mg(2+). The active site involves Glu107.

Belongs to the DNA polymerase type-Y family. Monomer. Mg(2+) serves as cofactor.

The protein localises to the cytoplasm. It catalyses the reaction DNA(n) + a 2'-deoxyribonucleoside 5'-triphosphate = DNA(n+1) + diphosphate. Its function is as follows. Poorly processive, error-prone DNA polymerase involved in untargeted mutagenesis. Copies undamaged DNA at stalled replication forks, which arise in vivo from mismatched or misaligned primer ends. These misaligned primers can be extended by PolIV. Exhibits no 3'-5' exonuclease (proofreading) activity. May be involved in translesional synthesis, in conjunction with the beta clamp from PolIII. This is DNA polymerase IV from Legionella pneumophila (strain Lens).